The primary structure comprises 714 residues: MRMTVIPIVILCGVLSVVYAVWTTKSVLDADQGNERMREIAGYIREGAQAYLTRQYLTIAIVGLIVAVLAWYLLSAIAAIGFVIGAVLSGVAGFVGMHVSVRANLRTAQAASHSLGAGLDIAFKSGAITGMLVAGLALLGVSIYYFVLTSVLGHPPGSRAVIDALVSLGFGASLISIFARLGGGIFTKGADVGGDLVGKVEAGIPEDDPRNPATIADNVGDNVGDCAGMAADLFETYAVSVVATMVLAAIFFAGTPILESAMVYPLAICGACILTSIAGTFFVKLGTNNSIMGALYKGLIATGVFSVAGLAVATYATVGWGTIGTVAGMEITGTNLFFCGLVGLVVTALIVVITEYYTGTNKRPVNSIAQASVTGHGTNVIQGLAVSLESTALPAIVIVGGIIGTYQLGGLFGTGIAVTAMLGLAGMIVALDAFGPVTDNAGGIAEMAGLDPDVRKATDALDAVGNTTKAVTKGYAIGSAGLGALVLFAAYANDLSYFAANGDTYPYFKDIGEISFSLANPYVVAGLLFGGLIPYLFGGIAMTAVGKAASAIVEEVRRQFREKPGIMAGTEKPDYGRAVDLLTKAAIREMVIPSLLPVLAPLVVYFGVLLISGSKASAFAALGASLLGVIINGLFVAISMTSGGGAWDNAKKSFEDGFIDKDGVRHVKGSEAHKASVTGDTVGDPYKDTAGPAVNPAIKITNIVALLLLAVLAH.

The N-terminal stretch at 1 to 20 is a signal peptide; it reads MRMTVIPIVILCGVLSVVYA. 4 helical membrane-spanning segments follow: residues 52–74, 85–105, 128–148, and 166–186; these read LTRQ…WYLL, GAVL…RANL, ITGM…YFVL, and VSLG…GGIF. Lysine 188 serves as a coordination point for substrate. Aspartate 191, aspartate 195, asparagine 218, and aspartate 221 together coordinate Mg(2+). 6 helical membrane-spanning segments follow: residues 238–258, 263–283, 298–318, 333–353, 383–403, and 411–431; these read AVSV…TPIL, VYPL…TFFV, GLIA…YATV, GTNL…IVVI, GLAV…GGII, and LFGT…IVAL. Aspartate 439 lines the Mg(2+) pocket. The next 4 membrane-spanning stretches (helical) occupy residues 470–490, 522–542, 591–611, and 618–638; these read AVTK…LFAA, YVVA…GIAM, VIPS…VLLI, and AFAA…FVAI. Ca(2+)-binding residues include aspartate 648, aspartate 680, and aspartate 684. Residue lysine 687 participates in substrate binding. A helical membrane pass occupies residues 693–713; sequence AVNPAIKITNIVALLLLAVLA.

It belongs to the H(+)-translocating pyrophosphatase (TC 3.A.10) family. K(+)-insensitive subfamily. Homodimer. Requires Mg(2+) as cofactor.

It localises to the acidocalcisome membrane. The catalysed reaction is diphosphate + H2O + H(+)(in) = 2 phosphate + 2 H(+)(out). Functionally, proton pump that utilizes the energy of pyrophosphate hydrolysis as the driving force for proton movement across the membrane. Generates a proton motive force. The polypeptide is K(+)-insensitive pyrophosphate-energized proton pump (Agrobacterium fabrum (strain C58 / ATCC 33970) (Agrobacterium tumefaciens (strain C58))).